We begin with the raw amino-acid sequence, 484 residues long: Cholesterol 22-hydroxylase CYP90B27 (484 aa).

A helical transmembrane segment spans residues 2 to 22 (ALELILVLSSLIVILIIFFSF). Cysteine 429 is a heme binding site.

This sequence belongs to the cytochrome P450 family. Expressed in roots.

It localises to the membrane. It catalyses the reaction cholesterol + reduced [NADPH--hemoprotein reductase] + O2 = (22R)-hydroxycholesterol + oxidized [NADPH--hemoprotein reductase] + H2O + H(+). The protein operates within steroid metabolism; cholesterol metabolism. In terms of biological role, involved in the biosynthesis of steroidal saponins and alkaloids natural products from cholesterol such as spirostane-type saponins and polyphyllins, compounds with pharmacological activity. Catalyzes the C-22 hydroxylation of cholesterol to form 22R-hydroxycholesterol. This chain is Cholesterol 22-hydroxylase CYP90B27, found in Paris polyphylla (Daiswa polyphylla).